Consider the following 175-residue polypeptide: Large ribosomal subunit protein uL15 (175 aa).

Disordered regions lie at residues 1 to 65 and 155 to 175; these read MSTL…LPKF and PESAAKAHAGKGVKAPRQPKA. Residues 12–21 show a composition bias toward basic residues; the sequence is RSWHRKKRVG. Over residues 22–38 the composition is skewed to gly residues; the sequence is RGQGSGLGKTAGRGGKG. A compositionally biased stretch (low complexity) spans 160–169; the sequence is KAHAGKGVKA.

It belongs to the universal ribosomal protein uL15 family. In terms of assembly, part of the 50S ribosomal subunit.

In terms of biological role, binds to the 23S rRNA. The polypeptide is Large ribosomal subunit protein uL15 (Myxococcus xanthus (strain DK1622)).